The following is a 350-amino-acid chain: 3-isopropylmalate dehydrogenase (350 aa).

Residue 76–87 (GPKWDNAPKRPE) participates in NAD(+) binding. The substrate site is built by R94, R104, R132, and D217. Mg(2+) is bound by residues D217, D241, and D245. 275-287 (GSAPDIANQNIAN) is an NAD(+) binding site.

This sequence belongs to the isocitrate and isopropylmalate dehydrogenases family. LeuB type 1 subfamily. In terms of assembly, homodimer. Mg(2+) is required as a cofactor. Requires Mn(2+) as cofactor.

Its subcellular location is the cytoplasm. The enzyme catalyses (2R,3S)-3-isopropylmalate + NAD(+) = 4-methyl-2-oxopentanoate + CO2 + NADH. It functions in the pathway amino-acid biosynthesis; L-leucine biosynthesis; L-leucine from 3-methyl-2-oxobutanoate: step 3/4. Its function is as follows. Catalyzes the oxidation of 3-carboxy-2-hydroxy-4-methylpentanoate (3-isopropylmalate) to 3-carboxy-4-methyl-2-oxopentanoate. The product decarboxylates to 4-methyl-2 oxopentanoate. The polypeptide is 3-isopropylmalate dehydrogenase (Listeria monocytogenes serotype 4b (strain F2365)).